An 82-amino-acid chain; its full sequence is MTDTNQNSSRRPFHRRRKTCPFSGATAPKIDYKDIKLLQRYISERGKIVPSRITAVSQKKQRELANAIKRARFLGLLPYVIK.

Residues 1–10 show a composition bias toward polar residues; the sequence is MTDTNQNSSR. The interval 1 to 21 is disordered; sequence MTDTNQNSSRRPFHRRRKTCP.

It belongs to the bacterial ribosomal protein bS18 family. As to quaternary structure, part of the 30S ribosomal subunit. Forms a tight heterodimer with protein bS6.

Its function is as follows. Binds as a heterodimer with protein bS6 to the central domain of the 16S rRNA, where it helps stabilize the platform of the 30S subunit. This Bartonella tribocorum (strain CIP 105476 / IBS 506) protein is Small ribosomal subunit protein bS18.